The following is a 449-amino-acid chain: 3-phosphoshikimate 1-carboxyvinyltransferase (449 aa).

Residues 1 to 30 (MSHDSSPQPLTAAPGAPLRGRLRPPGDKSI) form a disordered region. Lys-28, Ser-29, and Arg-33 together coordinate 3-phosphoshikimate. Lys-28 is a binding site for phosphoenolpyruvate. Gly-101 and Arg-129 together coordinate phosphoenolpyruvate. Positions 175, 177, 330, and 357 each coordinate 3-phosphoshikimate. A phosphoenolpyruvate-binding site is contributed by Gln-177. Catalysis depends on Asp-330, which acts as the Proton acceptor. Residues Arg-361 and Arg-405 each contribute to the phosphoenolpyruvate site.

This sequence belongs to the EPSP synthase family. Monomer.

It is found in the cytoplasm. It catalyses the reaction 3-phosphoshikimate + phosphoenolpyruvate = 5-O-(1-carboxyvinyl)-3-phosphoshikimate + phosphate. It functions in the pathway metabolic intermediate biosynthesis; chorismate biosynthesis; chorismate from D-erythrose 4-phosphate and phosphoenolpyruvate: step 6/7. In terms of biological role, catalyzes the transfer of the enolpyruvyl moiety of phosphoenolpyruvate (PEP) to the 5-hydroxyl of shikimate-3-phosphate (S3P) to produce enolpyruvyl shikimate-3-phosphate and inorganic phosphate. This Methylobacterium radiotolerans (strain ATCC 27329 / DSM 1819 / JCM 2831 / NBRC 15690 / NCIMB 10815 / 0-1) protein is 3-phosphoshikimate 1-carboxyvinyltransferase.